Consider the following 2571-residue polypeptide: Stabilin-1 (2571 aa).

A signal peptide spans 1 to 25 (MAEPRTLLLLCVLVLCLSDSSFIRG). Residues 26–2475 (QTVRSKRCDI…RAVLGSEPPP (2450 aa)) lie on the Extracellular side of the membrane. EGF-like domains follow at residues 111–149 (FECP…SVCQ), 157–194 (FGPD…PHCD), 196–232 (ELPV…NVCL), and 233–272 (APDP…KVCL). Disulfide bonds link Cys113–Cys127, Cys121–Cys137, Cys139–Cys148, Cys161–Cys172, Cys165–Cys182, Cys184–Cys193, Cys200–Cys211, Cys205–Cys218, Cys220–Cys231, Cys237–Cys248, Cys242–Cys258, and Cys260–Cys271. 2 N-linked (GlcNAc...) asparagine glycosylation sites follow: Asn134 and Asn142. Asn287, Asn313, Asn416, Asn607, Asn674, Asn713, and Asn746 each carry an N-linked (GlcNAc...) asparagine glycan. FAS1 domains lie at 357 to 495 (YGHL…TALR) and 507 to 642 (KKTV…EGIL). The EGF-like 5 domain occupies 729–769 (DCTQCPGGFSNPCYGKGNCSDGVRGNGACLCFPDYKGIACH). 3 disulfides stabilise this stretch: Cys733–Cys747, Cys741–Cys757, and Cys759–Cys768. N-linked (GlcNAc...) asparagine glycosylation occurs at Asn817. 4 consecutive EGF-like domains span residues 819–859 (SMGN…NGFS), 862–904 (RSNP…RICV), 905–947 (AIDE…YECS), and 948–987 (PIDP…DGFS). Disulfide bonds link Cys823–Cys838, Cys832–Cys847, Cys866–Cys880, Cys874–Cys890, Cys892–Cys903, Cys909–Cys923, Cys917–Cys933, Cys935–Cys946, Cys952–Cys965, and Cys959–Cys975. FAS1 domains lie at 989 to 1119 (YGDI…SQVL) and 1129 to 1254 (GPGL…SGIL). N-linked (GlcNAc...) asparagine glycosylation is found at Asn1011, Asn1088, Asn1097, Asn1171, Asn1179, Asn1223, and Asn1275. One can recognise a Laminin EGF-like 1 domain in the interval 1328–1393 (TLCEPCPGGL…CDCDHGLCQE (66 aa)). 18 cysteine pairs are disulfide-bonded: Cys1333/Cys1347, Cys1341/Cys1357, Cys1359/Cys1368, Cys1380/Cys1391, Cys1384/Cys1401, Cys1403/Cys1412, Cys1421/Cys1431, Cys1425/Cys1441, Cys1443/Cys1454, Cys1460/Cys1473, Cys1467/Cys1483, Cys1485/Cys1496, Cys1502/Cys1515, Cys1509/Cys1525, Cys1527/Cys1539, Cys1545/Cys1558, Cys1552/Cys1568, and Cys1570/Cys1582. N-linked (GlcNAc...) asparagine glycosylation is present at Asn1398. EGF-like domains lie at 1417 to 1455 (TDHQ…SYCS), 1456 to 1497 (EVDP…ELCQ), 1498 to 1540 (EINS…QTCK), and 1541 to 1583 (LLDP…ITCH). 2 N-linked (GlcNAc...) asparagine glycosylation sites follow: Asn1450 and Asn1472. FAS1 domains are found at residues 1583 to 1709 (HGRV…DHVL) and 1725 to 1865 (PQRN…DQLL). 2 N-linked (GlcNAc...) asparagine glycosylation sites follow: Asn1627 and Asn1728. Positions 1966-2031 (INCHACPGGP…RCTQHGRCDE (66 aa)) constitute a Laminin EGF-like 2 domain. 17 cysteine pairs are disulfide-bonded: Cys1971–Cys1985, Cys1979–Cys1995, Cys1997–Cys2006, Cys2018–Cys2029, Cys2023–Cys2039, Cys2041–Cys2050, Cys2060–Cys2070, Cys2064–Cys2076, Cys2078–Cys2089, Cys2095–Cys2108, Cys2102–Cys2117, Cys2119–Cys2130, Cys2136–Cys2150, Cys2144–Cys2160, Cys2162–Cys2173, Cys2230–Cys2299, and Cys2254–Cys2275. 3 consecutive EGF-like domains span residues 2056-2090 (LQPV…RVCT), 2091-2131 (VADL…WSCR), and 2132-2174 (ARDP…LQCL). An N-linked (GlcNAc...) asparagine glycan is attached at Asn2107. The region spanning 2208-2301 (GVFHIQATSG…SELWDAYCYR (94 aa)) is the Link domain. N-linked (GlcNAc...) asparagine glycosylation is found at Asn2261, Asn2290, Asn2334, Asn2347, Asn2379, Asn2393, Asn2400, and Asn2424. The region spanning 2322-2459 (NGKLLDVLAA…GIIHALASPL (138 aa)) is the FAS1 7 domain. Residues 2476-2496 (VALSLGVVVTSGTLLGLVAGA) traverse the membrane as a helical segment. Residues 2497–2571 (LYLRARGKPP…PDTQRVLKVK (75 aa)) lie on the Cytoplasmic side of the membrane.

As to quaternary structure, interacts with CHID1.

It localises to the membrane. Functionally, acts as a scavenger receptor for acetylated low density lipoprotein. Binds to both Gram-positive and Gram-negative bacteria and may play a role in defense against bacterial infection. When inhibited in endothelial tube formation assays, there is a marked decrease in cell-cell interactions, suggesting a role in angiogenesis. Involved in the delivery of newly synthesized CHID1/SI-CLP from the biosynthetic compartment to the endosomal/lysosomal system. The polypeptide is Stabilin-1 (Stab1) (Mus musculus (Mouse)).